Reading from the N-terminus, the 240-residue chain is Tetrahydromethanopterin S-methyltransferase subunit A (240 aa).

Residues 1–218 (MADKKEPAPG…KFHSGVHAGK (218 aa)) are Cytoplasmic-facing. Residue His-85 participates in 5-hydroxybenzimidazolylcob(I)amide binding. The helical transmembrane segment at 219–239 (IEGAMIGLTVTISLLGLLLLG) threads the bilayer. A topological domain (extracellular) is located at residue Arg-240.

It belongs to the MtrA family. In terms of assembly, the complex is composed of 8 subunits; MtrA, MtrB, MtrC, MtrD, MtrE, MtrF, MtrG and MtrH. 5-hydroxybenzimidazolylcob(I)amide serves as cofactor.

It is found in the cell membrane. The enzyme catalyses 5-methyl-5,6,7,8-tetrahydromethanopterin + coenzyme M + 2 Na(+)(in) = 5,6,7,8-tetrahydromethanopterin + methyl-coenzyme M + 2 Na(+)(out). It functions in the pathway one-carbon metabolism; methanogenesis from CO(2); methyl-coenzyme M from 5,10-methylene-5,6,7,8-tetrahydromethanopterin: step 2/2. Its function is as follows. Part of a complex that catalyzes the formation of methyl-coenzyme M and tetrahydromethanopterin from coenzyme M and methyl-tetrahydromethanopterin. This is an energy-conserving, sodium-ion translocating step. The sequence is that of Tetrahydromethanopterin S-methyltransferase subunit A from Methanosarcina barkeri (strain Fusaro / DSM 804).